A 577-amino-acid polypeptide reads, in one-letter code: Outer spore wall assembly protein SHE10 (577 aa).

Residues 1-23 form the signal peptide; sequence MGKLIKLITTLTVLVSLLQYCCE. 2 coiled-coil regions span residues 379-416 and 513-561; these read NETR…ENVE and ILRS…EEDV. The segment covering 525–545 has biased composition (basic and acidic residues); it reads RERKERERKEREKAAAEEFQR. The segment at 525–577 is disordered; sequence RERKERERKEREKAAAEEFQRQQELLRQQEEEDEEDVSYTSTSTITTTTTMTL. Low complexity predominate over residues 562–577; sequence SYTSTSTITTTTTMTL.

It belongs to the SHE10 family. Component of the mitochondria-localized RNase mitochondrial RNA-processing (RNase MRP) composed of one single RNA encoded by the NME1 gene and at least 31 proteins. Absent in the nucleus-localized RNase MRP (NuMRP).

It localises to the mitochondrion. In terms of biological role, involved in spore wall assembly. May be a component of the mitochondrial RNase MRP (MtMRP), a ribonucleoprotein endoribonuclease involved in the cleaving RNA transcripts to generate primers for DNA replication in mitochondria. This Saccharomyces cerevisiae (strain Lalvin EC1118 / Prise de mousse) (Baker's yeast) protein is Outer spore wall assembly protein SHE10.